A 386-amino-acid chain; its full sequence is Cytochrome b (386 aa).

4 helical membrane-spanning segments follow: residues 32-52, 76-98, 113-133, and 179-199; these read LGSLLGLCLVIQIASGIFLAM, YLIRYIHANGASFFFVCMYAHIG, VWVIGVVIFIITMATAFLGYC, and FFALHYLCPFILAALVIMHLM. His82 and His96 together coordinate heme b. Heme b is bound by residues His183 and His197. Residue His202 participates in a ubiquinone binding. 4 helical membrane-spanning segments follow: residues 225–245, 289–309, 321–341, and 348–368; these read FVFKDLVTVFVFLLIFSLFVF, LGGVIAMFAAILILLVLPVTD, ISKTFFFLFLYNFILLGQLGQ, and FIQLGQFATLNYFLYFIFIVP.

This sequence belongs to the cytochrome b family. As to quaternary structure, fungal cytochrome b-c1 complex contains 10 subunits; 3 respiratory subunits, 2 core proteins and 5 low-molecular weight proteins. Cytochrome b-c1 complex is a homodimer. It depends on heme b as a cofactor.

It localises to the mitochondrion inner membrane. In terms of biological role, component of the ubiquinol-cytochrome c reductase complex (complex III or cytochrome b-c1 complex) that is part of the mitochondrial respiratory chain. The b-c1 complex mediates electron transfer from ubiquinol to cytochrome c. Contributes to the generation of a proton gradient across the mitochondrial membrane that is then used for ATP synthesis. In Wickerhamomyces canadensis (Yeast), this protein is Cytochrome b (COB).